Here is a 174-residue protein sequence, read N- to C-terminus: uncharacterized protein (174 aa).

Positions 1–55 (MGCVVSKSDDIKNENESRQRNQASSSQQPSSSQTPSKQIGIAAKDSEEQPQEVSY) are disordered. The N-myristoyl glycine moiety is linked to residue Gly-2. Basic and acidic residues predominate over residues 7–19 (KSDDIKNENESRQ). Positions 20-38 (RNQASSSQQPSSSQTPSKQ) are enriched in low complexity.

This is an uncharacterized protein from Dictyostelium discoideum (Social amoeba).